We begin with the raw amino-acid sequence, 470 residues long: 6-phospho-beta-glucosidase BglB (470 aa).

Residue Glu-172 is the Proton donor of the active site. The Nucleophile role is filled by Glu-361.

This sequence belongs to the glycosyl hydrolase 1 family.

It carries out the reaction 6-phospho-beta-D-glucosyl-(1-&gt;4)-D-glucose + H2O = D-glucose 6-phosphate + D-glucose. Catalyzes the hydrolysis of phosphorylated beta-glucosides into glucose-6-phosphate (G-6-P) and aglycone. It has a high affinity for phosphorylated aromatic beta-glucosides (p-nitrophenyl-beta-glucoside, phenyl beta-glucoside, arbutin and phosphorylated salicin), and a low affinity for phosphorylated beta-methyl-glucoside. The chain is 6-phospho-beta-glucosidase BglB (bglB) from Escherichia coli (strain K12).